The primary structure comprises 432 residues: Adenylosuccinate synthetase (432 aa).

Residues 13–19 and 41–43 contribute to the GTP site; these read GDEGKGK and GHT. The Proton acceptor role is filled by Asp-14. The Mg(2+) site is built by Asp-14 and Gly-41. IMP-binding positions include 14–17, 39–42, Thr-130, Arg-144, Gln-225, Thr-240, and Arg-304; these read DEGK and NAGH. Catalysis depends on His-42, which acts as the Proton donor. A substrate-binding site is contributed by 300-306; sequence ATTGRRR. GTP-binding positions include Arg-306, 332-334, and 415-417; these read KLD and STG.

This sequence belongs to the adenylosuccinate synthetase family. Homodimer. It depends on Mg(2+) as a cofactor.

The protein resides in the cytoplasm. It carries out the reaction IMP + L-aspartate + GTP = N(6)-(1,2-dicarboxyethyl)-AMP + GDP + phosphate + 2 H(+). It participates in purine metabolism; AMP biosynthesis via de novo pathway; AMP from IMP: step 1/2. Its function is as follows. Plays an important role in the de novo pathway of purine nucleotide biosynthesis. Catalyzes the first committed step in the biosynthesis of AMP from IMP. The protein is Adenylosuccinate synthetase of Sodalis glossinidius (strain morsitans).